Reading from the N-terminus, the 356-residue chain is Alternative oxidase, mitochondrial (356 aa).

A helical membrane pass occupies residues valine 152–leucine 172. Fe cation-binding residues include glutamate 159, glutamate 198, and histidine 201. The chain crosses the membrane as a helical span at residues leucine 217–serine 237. Positions 249, 304, and 307 each coordinate Fe cation. Residues tyrosine 330–isoleucine 356 are disordered.

Belongs to the alternative oxidase family. Fe cation is required as a cofactor.

The protein resides in the mitochondrion inner membrane. Its function is as follows. Catalyzes cyanide-resistant oxygen consumption. May increase respiration when the cytochrome respiratory pathway is restricted, or in response to low temperatures. This chain is Alternative oxidase, mitochondrial (AOX1), found in Ajellomyces capsulatus (Darling's disease fungus).